The chain runs to 277 residues: NH(3)-dependent NAD(+) synthetase (277 aa).

46–53 is an ATP binding site; that stretch reads GISGGQDS. Aspartate 52 lines the Mg(2+) pocket. A deamido-NAD(+)-binding site is contributed by arginine 142. ATP is bound at residue threonine 162. Position 167 (glutamate 167) interacts with Mg(2+). The deamido-NAD(+) site is built by lysine 175 and aspartate 182. Residues lysine 191 and threonine 213 each coordinate ATP. 263–264 lines the deamido-NAD(+) pocket; sequence HK.

Belongs to the NAD synthetase family. In terms of assembly, homodimer.

The catalysed reaction is deamido-NAD(+) + NH4(+) + ATP = AMP + diphosphate + NAD(+) + H(+). Its pathway is cofactor biosynthesis; NAD(+) biosynthesis; NAD(+) from deamido-NAD(+) (ammonia route): step 1/1. Catalyzes the ATP-dependent amidation of deamido-NAD to form NAD. Uses ammonia as a nitrogen source. The protein is NH(3)-dependent NAD(+) synthetase of Corynebacterium glutamicum (strain ATCC 13032 / DSM 20300 / JCM 1318 / BCRC 11384 / CCUG 27702 / LMG 3730 / NBRC 12168 / NCIMB 10025 / NRRL B-2784 / 534).